Consider the following 653-residue polypeptide: Choline transporter-like protein 1 (653 aa).

Gly-2 is lipidated: N-myristoyl glycine. At 2–29 (GCCSSASAAQSSKREWKPLEDRSCTDIP) the chain is on the cytoplasmic side. Residues 30–50 (WLLLFVLFCIGMGFICGFSVA) form a helical membrane-spanning segment. The Mitochondrial intermembrane segment spans residues 51–211 (TGAAARLVSG…RLISGVMTSK (161 aa)). A helical transmembrane segment spans residues 212–232 (EIILGLCLLSLVLSMILMVII). Residues 233–237 (RYISR) are Cytoplasmic-facing. Residues 238–258 (VLVWILTVLVILGSLGGTGVL) traverse the membrane as a helical segment. The Mitochondrial intermembrane segment spans residues 259 to 287 (WWLYAKQRRSPKEAVIPEQLQIAEDNLRA). Residues 288 to 308 (LLIYAISATVFTVILFLIMLV) traverse the membrane as a helical segment. The Cytoplasmic portion of the chain corresponds to 309-314 (MRKRVA). Residues 315–335 (LTIALFHVAGKVFIHLPLLVF) form a helical membrane-spanning segment. Residues 336–337 (QP) lie on the Mitochondrial intermembrane side of the membrane. A helical transmembrane segment spans residues 338-358 (FWTFFALVLFWAYWIMTLLFL). Topologically, residues 359–379 (GTTGSAVQNEQGFVEYKISGP) are cytoplasmic. The helical transmembrane segment at 380 to 400 (LQYMWWYHVVGLIWISEFILA) threads the bilayer. Residues 401 to 536 (CQQMTVAGAV…RVAAINTVGD (136 aa)) are Mitochondrial intermembrane-facing. A helical membrane pass occupies residues 537-557 (FMLFLGKVLIVCSTGLAGIML). The Cytoplasmic portion of the chain corresponds to 558–565 (LNYQQDYT). A helical transmembrane segment spans residues 566 to 586 (VWVLPLIIVCLFAFLVAHCFL). The Mitochondrial intermembrane segment spans residues 587-653 (SIYEMVVDVL…RELKPMLRKR (67 aa)).

The protein belongs to the CTL (choline transporter-like) family. As to expression, specifically abundant in skeletal muscle (at protein level).

Its subcellular location is the cell membrane. The protein localises to the mitochondrion outer membrane. It catalyses the reaction choline(out) + n H(+)(in) = choline(in) + n H(+)(out). The catalysed reaction is ethanolamine(out) + n H(+)(in) = ethanolamine(in) + n H(+)(out). Choline/H+ antiporter. Also acts as a high-affinity ethanolamine/H+ antiporter, regulating the supply of extracellular ethanolamine (Etn) for the CDP-Etn pathway, redistribute intracellular Etn and balance the CDP-Cho and CDP-Etn arms of the Kennedy pathway. Involved in membrane synthesis and myelin production. The protein is Choline transporter-like protein 1 (Slc44a1) of Mus musculus (Mouse).